Reading from the N-terminus, the 90-residue chain is Protein LURE 1.4 (90 aa).

Residues 1 to 19 (MKCPSIFLTLLIFVSSCTS) form the signal peptide. The N-linked (GlcNAc...) asparagine glycan is linked to Asn-23. 3 disulfide bridges follow: Cys-58-Cys-75, Cys-61-Cys-82, and Cys-65-Cys-84. The tract at residues 67–87 (RRGKYIRTCSFERKLCRCSIS) is PRK6 binding.

Belongs to the DEFL family. As to quaternary structure, binds to PRK6 LRRs. Expressed in the pistil. Detected exclusively in the synergid cells.

It is found in the secreted. Functionally, pollen tube attractants guiding pollen tubes to the ovular micropyle. This is Protein LURE 1.4 from Arabidopsis thaliana (Mouse-ear cress).